Consider the following 218-residue polypeptide: 3,4-dihydroxy-2-butanone 4-phosphate synthase (218 aa).

D-ribulose 5-phosphate-binding positions include 38–39 (RE), Asp43, 151–155 (RRGHT), and Glu175. Mg(2+) is bound at residue Glu39. Position 154 (His154) interacts with Mg(2+).

The protein belongs to the DHBP synthase family. As to quaternary structure, homodimer. The cofactor is Mg(2+). Requires Mn(2+) as cofactor.

The enzyme catalyses D-ribulose 5-phosphate = (2S)-2-hydroxy-3-oxobutyl phosphate + formate + H(+). It functions in the pathway cofactor biosynthesis; riboflavin biosynthesis; 2-hydroxy-3-oxobutyl phosphate from D-ribulose 5-phosphate: step 1/1. Its function is as follows. Catalyzes the conversion of D-ribulose 5-phosphate to formate and 3,4-dihydroxy-2-butanone 4-phosphate. The chain is 3,4-dihydroxy-2-butanone 4-phosphate synthase from Shewanella frigidimarina (strain NCIMB 400).